Consider the following 506-residue polypeptide: Asparagine--tRNA ligase (506 aa).

It belongs to the class-II aminoacyl-tRNA synthetase family. In terms of assembly, homodimer.

The protein resides in the cytoplasm. The catalysed reaction is tRNA(Asn) + L-asparagine + ATP = L-asparaginyl-tRNA(Asn) + AMP + diphosphate + H(+). The protein is Asparagine--tRNA ligase of Onion yellows phytoplasma (strain OY-M).